A 277-amino-acid polypeptide reads, in one-letter code: Large ribosomal subunit protein uL2 (277 aa).

Residues G222 to K277 are disordered.

The protein belongs to the universal ribosomal protein uL2 family. As to quaternary structure, part of the 50S ribosomal subunit. Forms a bridge to the 30S subunit in the 70S ribosome.

Functionally, one of the primary rRNA binding proteins. Required for association of the 30S and 50S subunits to form the 70S ribosome, for tRNA binding and peptide bond formation. It has been suggested to have peptidyltransferase activity; this is somewhat controversial. Makes several contacts with the 16S rRNA in the 70S ribosome. The chain is Large ribosomal subunit protein uL2 from Bartonella quintana (strain Toulouse) (Rochalimaea quintana).